A 328-amino-acid polypeptide reads, in one-letter code: tRNA uridine(34) hydroxylase (328 aa).

Residues 123-217 (SDPDVLLVDT…YLEEVPQEES (95 aa)) form the Rhodanese domain. Catalysis depends on cysteine 177, which acts as the Cysteine persulfide intermediate.

It belongs to the TrhO family.

The catalysed reaction is uridine(34) in tRNA + AH2 + O2 = 5-hydroxyuridine(34) in tRNA + A + H2O. Its function is as follows. Catalyzes oxygen-dependent 5-hydroxyuridine (ho5U) modification at position 34 in tRNAs. The chain is tRNA uridine(34) hydroxylase from Psychromonas ingrahamii (strain DSM 17664 / CCUG 51855 / 37).